Here is a 116-residue protein sequence, read N- to C-terminus: uncharacterized protein (116 aa).

The Extracellular segment spans residues 1-46 (MGDNTTVAPGTNQTLVEEDLGAQITHTLMVQIMSKLNEMLTEYQPQ). Residues Asn4 and Asn12 are each glycosylated (N-linked (GlcNAc...) asparagine; by host). The helical transmembrane segment at 47-67 (IIGIGATVLAIFVIMFISLLI) threads the bilayer. The Cytoplasmic segment spans residues 68–116 (ILGCNCIRPYNFKNLKRYITGKASKSVEYQPLKMSAVNMGMDEDDEFLA).

The protein localises to the host membrane. This is an uncharacterized protein from Magallana gigas (Pacific oyster).